Here is a 333-residue protein sequence, read N- to C-terminus: GDP-mannose transporter GONST1 (333 aa).

Transmembrane regions (helical) follow at residues 33-55 (ALLSGLAYCISSCSMILVNKFVL), 62-84 (AGIFLMLYQNFVSVIIVVGLSLM), 99-121 (VWFPVNVIFVGMLITSMFSLKYI), 153-170 (VWAALFLMIISAVSGGIT), 174-196 (FNAVGYAWQIANCFLTASYSLTL), 216-238 (SMVLLNNTLSLPLGLLLSYFFNE), 253-275 (FWMVMTLSGLLGLAISFTSMWFL), 282-304 (TYSLVGSLNKIPLSIAGIVLFNV), and 308-325 (LQNSASILFGLVAGVVFA).

The protein belongs to the nucleotide-sugar transporter family. GDP-Mannose:GMP antiporter (GMA) (TC 2.A.7.13) subfamily.

Its subcellular location is the golgi apparatus membrane. Involved in the import of GDP-mannose from the cytoplasm into the Golgi lumen. Required for the luminal synthesis of a variety of plant cell surface components. Is required for the correct mannosylation of the glycosylinositol phosphoceramides (GIPC). Can indifferently transport GDP-mannose, GDP-Glucose, GDP-Fucose or GDP-Galactose in vitro. This chain is GDP-mannose transporter GONST1, found in Arabidopsis thaliana (Mouse-ear cress).